A 403-amino-acid polypeptide reads, in one-letter code: Queuine tRNA-ribosyltransferase catalytic subunit 1 (403 aa).

A2 carries the post-translational modification N-acetylalanine. The active-site Proton acceptor is D105. A queuine-binding site is contributed by 105–109; that stretch reads DSGGF. Position 139 is a phosphoserine (S139). The queuine site is built by D159, Q202, and G229. Residues 260-266 form an RNA binding region; it reads GVGYATD. Catalysis depends on D279, which acts as the Nucleophile. Positions 284–288 are RNA binding; important for wobble base 34 recognition; sequence TRTAR. Zn(2+) is bound by residues C317, C319, C322, and H348.

This sequence belongs to the queuine tRNA-ribosyltransferase family. As to quaternary structure, heterodimer of a catalytic subunit QTRT1 and an accessory subunit QTRT2. Requires Zn(2+) as cofactor. As to expression, expressed in brain, heart, kidney, liver, ling, skeletal muscle, spleen and testis.

It is found in the cytoplasm. It localises to the mitochondrion outer membrane. The protein resides in the nucleus. The catalysed reaction is guanosine(34) in tRNA + queuine = queuosine(34) in tRNA + guanine. Functionally, catalytic subunit of the queuine tRNA-ribosyltransferase (TGT) that catalyzes the base-exchange of a guanine (G) residue with queuine (Q) at position 34 (anticodon wobble position) in tRNAs with GU(N) anticodons (tRNA-Asp, -Asn, -His and -Tyr), resulting in the hypermodified nucleoside queuosine (7-(((4,5-cis-dihydroxy-2-cyclopenten-1-yl)amino)methyl)-7-deazaguanosine). Catalysis occurs through a double-displacement mechanism. The nucleophile active site attacks the C1' of nucleotide 34 to detach the guanine base from the RNA, forming a covalent enzyme-RNA intermediate. The proton acceptor active site deprotonates the incoming queuine, allowing a nucleophilic attack on the C1' of the ribose to form the product. Modification of cytoplasmic tRNAs with queuosine controls the elongation speed of cognate codons, thereby ensuring the correct folding of nascent proteins to maintain proteome integrity. This chain is Queuine tRNA-ribosyltransferase catalytic subunit 1, found in Mus musculus (Mouse).